A 247-amino-acid chain; its full sequence is Carboxy-S-adenosyl-L-methionine synthase (247 aa).

S-adenosyl-L-methionine is bound by residues Y39, 64–66 (GCS), 117–118 (DI), N132, and R199.

Belongs to the class I-like SAM-binding methyltransferase superfamily. Cx-SAM synthase family. As to quaternary structure, homodimer.

It catalyses the reaction prephenate + S-adenosyl-L-methionine = carboxy-S-adenosyl-L-methionine + 3-phenylpyruvate + H2O. Its function is as follows. Catalyzes the conversion of S-adenosyl-L-methionine (SAM) to carboxy-S-adenosyl-L-methionine (Cx-SAM). This is Carboxy-S-adenosyl-L-methionine synthase from Aeromonas salmonicida (strain A449).